We begin with the raw amino-acid sequence, 255 residues long: MSNITMKELLEAGVHFGHQTKRWNPKMKPYIFGARNGIYIIDLQKTVRLFKNAYSFVTDAAQAGETVLFVGTKKQAQDSVAEEAQRCGQFYVNDRWLGGMLTNFATVKQSIDRLKRLDAMIADGTIEAYTKKEQLKLAKEREKLEKTLGGIKGMGKVPGVLFVVDPKNEEIAVSEAKKLGIPVVAIVDTNCDPDDINYVIPGNDDAIRAIRLLTSKMADAVLEGGQARNARLQTGAEEEFSTEGEEVVEETPAEA.

Residues 231-255 (RLQTGAEEEFSTEGEEVVEETPAEA) form a disordered region. Residues 236 to 255 (AEEEFSTEGEEVVEETPAEA) are compositionally biased toward acidic residues.

The protein belongs to the universal ribosomal protein uS2 family.

The polypeptide is Small ribosomal subunit protein uS2 (Citrifermentans bemidjiense (strain ATCC BAA-1014 / DSM 16622 / JCM 12645 / Bem) (Geobacter bemidjiensis)).